A 402-amino-acid chain; its full sequence is Ferrochelatase, mitochondrial (402 aa).

A mitochondrion-targeting transit peptide spans 1–33 (MAAAGRAARPLVAGGRQLRVPLRWRGQVAAAAP). The protoporphyrin IX site is built by Arg-94, Tyr-102, and Ser-109. A [2Fe-2S] cluster-binding site is contributed by Cys-175. Catalysis depends on residues His-209 and Asp-362. [2Fe-2S] cluster is bound by residues Cys-382, Cys-385, and Cys-390.

The protein belongs to the ferrochelatase family. Homodimer. Homotetramer. The cofactor is [2Fe-2S] cluster.

It localises to the mitochondrion inner membrane. The enzyme catalyses heme b + 2 H(+) = protoporphyrin IX + Fe(2+). Its pathway is porphyrin-containing compound metabolism; protoheme biosynthesis; protoheme from protoporphyrin-IX: step 1/1. Functionally, catalyzes the ferrous insertion into protoporphyrin IX. In Gallus gallus (Chicken), this protein is Ferrochelatase, mitochondrial.